The primary structure comprises 362 residues: L-arginine:L-lysine amidinotransferase (362 aa).

Residues Asp-195 and His-244 contribute to the active site. The active-site Amidino-cysteine intermediate is the Cys-346.

It belongs to the amidinotransferase family.

The catalysed reaction is L-lysine + L-arginine = L-homoarginine + L-ornithine. It carries out the reaction L-canavanine + L-ornithine = L-canaline + L-arginine + H(+). Functionally, involved in the biosynthesis of phaseolotoxin, a nonhost-specific toxin which is a key component in the development of the halo blight disease of beans. Catalyzes the transfer of an amidino group from arginine to lysine to produce one molecule of homoarginine and one molecule of ornithine, both being precursors in the biosynthesis of phaseolotoxin. Can also use L-canavanine as an alternative amidine donor with L-ornithine as amidine acceptor. The protein is L-arginine:L-lysine amidinotransferase of Pseudomonas savastanoi pv. phaseolicola (Pseudomonas syringae pv. phaseolicola).